The chain runs to 397 residues: Enoyl-[acyl-carrier-protein] reductase [NADH] (397 aa).

NAD(+) is bound by residues G48–Y53, F74–E75, D111–A112, and V139–A140. Y225 lines the substrate pocket. Y235 functions as the Proton donor in the catalytic mechanism. NAD(+) is bound by residues K244 and V273–T275.

This sequence belongs to the TER reductase family. Monomer.

It carries out the reaction a 2,3-saturated acyl-[ACP] + NAD(+) = a (2E)-enoyl-[ACP] + NADH + H(+). It functions in the pathway lipid metabolism; fatty acid biosynthesis. Functionally, involved in the final reduction of the elongation cycle of fatty acid synthesis (FAS II). Catalyzes the reduction of a carbon-carbon double bond in an enoyl moiety that is covalently linked to an acyl carrier protein (ACP). The protein is Enoyl-[acyl-carrier-protein] reductase [NADH] of Burkholderia pseudomallei (strain 1106a).